The primary structure comprises 638 residues: Probable potassium transport system protein Kup (638 aa).

12 consecutive transmembrane segments (helical) span residues 25 to 45 (LAIAAIGVVFGDIGTSPLYSL), 65 to 85 (VISLLFWAIILVVGIKYLLFV), 114 to 134 (AGALMALGIFGACMFYGDAVI), 152 to 172 (PHLSHLVLPITIVILIALFWI), 184 to 204 (FGPIMVLWFVAIAALGVYHIV), 226 to 246 (LLQAYVVLGSVVLVLTGAEAL), 262 to 282 (AYGLVMPSLVLNYFGQGALLI), 291 to 311 (PFFLLAPEWGLLPLVILSTVA), 352 to 372 (IYVPVVNWLLLFVILCIVIGF), 382 to 402 (YGIAVTATMVITTVLAAVVMV), 410 to 430 (LLVGAIIAVFLAVDLGFFGAN), and 434 to 454 (VAQGGWLPLGIGALLFFLLMT).

This sequence belongs to the HAK/KUP transporter (TC 2.A.72) family.

The protein resides in the cell inner membrane. The enzyme catalyses K(+)(in) + H(+)(in) = K(+)(out) + H(+)(out). Functionally, transport of potassium into the cell. Likely operates as a K(+):H(+) symporter. In Burkholderia lata (strain ATCC 17760 / DSM 23089 / LMG 22485 / NCIMB 9086 / R18194 / 383), this protein is Probable potassium transport system protein Kup.